The chain runs to 370 residues: Aminomethyltransferase (370 aa).

The protein belongs to the GcvT family. In terms of assembly, the glycine cleavage system is composed of four proteins: P, T, L and H.

It carries out the reaction N(6)-[(R)-S(8)-aminomethyldihydrolipoyl]-L-lysyl-[protein] + (6S)-5,6,7,8-tetrahydrofolate = N(6)-[(R)-dihydrolipoyl]-L-lysyl-[protein] + (6R)-5,10-methylene-5,6,7,8-tetrahydrofolate + NH4(+). Its function is as follows. The glycine cleavage system catalyzes the degradation of glycine. The polypeptide is Aminomethyltransferase (Prochlorococcus marinus (strain AS9601)).